Here is a 209-residue protein sequence, read N- to C-terminus: Small ribosomal subunit protein uS3 (209 aa).

Positions 38 to 107 (IRKVVKNAYS…RVIVNVEEIK (70 aa)) constitute a KH type-2 domain.

The protein belongs to the universal ribosomal protein uS3 family. As to quaternary structure, part of the 30S ribosomal subunit. Forms a tight complex with proteins S10 and S14.

In terms of biological role, binds the lower part of the 30S subunit head. Binds mRNA in the 70S ribosome, positioning it for translation. This Pseudothermotoga lettingae (strain ATCC BAA-301 / DSM 14385 / NBRC 107922 / TMO) (Thermotoga lettingae) protein is Small ribosomal subunit protein uS3.